Consider the following 1137-residue polypeptide: Otoancorin (1137 aa).

Positions M1–Q23 are cleaved as a signal peptide. N156, N211, N244, N289, N321, N380, N384, N530, N594, N740, and N798 each carry an N-linked (GlcNAc...) asparagine glycan. The span at H1095–P1115 shows a compositional bias: polar residues. Residues H1095–P1119 form a disordered region. A lipid anchor (GPI-anchor amidated glycine) is attached at G1113. The propeptide at S1114–S1137 is removed in mature form.

It belongs to the stereocilin family. As to expression, expressed in the inner ear and vestibule.

The protein resides in the apical cell membrane. It is found in the secreted. It localises to the extracellular space. Its subcellular location is the extracellular matrix. May act as an adhesion molecule. This is Otoancorin (Otoa) from Mus musculus (Mouse).